A 227-amino-acid chain; its full sequence is Cysteine-rich hydrophobic domain-containing protein 1 (227 aa).

Positions 1–84 (MSILLPNMAE…PPRVVSEEHL (84 aa)) are disordered. The segment covering 13 to 23 (TISELEEEEEA) has biased composition (acidic residues). Over residues 24-44 (ATSSSSPSSSPSSSSSSSVSG) the composition is skewed to low complexity. Residues 45–72 (PDEDEEDEEEEEEEDEEEEDEEEEEEEV) show a composition bias toward acidic residues. The stretch at 46-73 (DEDEEDEEEEEEEDEEEEDEEEEEEEVP) forms a coiled coil.

This sequence belongs to the CHIC family. Post-translationally, palmitoylated. In terms of tissue distribution, expressed moderately in the brain.

It is found in the cell membrane. The protein localises to the cytoplasmic vesicle. The chain is Cysteine-rich hydrophobic domain-containing protein 1 (Chic1) from Mus musculus (Mouse).